Reading from the N-terminus, the 339-residue chain is Very-long-chain 3-oxoacyl-CoA reductase (339 aa).

A helical transmembrane segment spans residues 21–41 (WTTFLLALGSFNALRIIYQTL). Residues Val-67, Asn-96, Asp-121, Asn-148, Tyr-215, Lys-219, Val-248, and Ser-250 each coordinate NADP(+). Residue Tyr-215 is the Proton acceptor of the active site. The active-site Lowers pKa of active site Tyr is the Lys-219.

The protein belongs to the short-chain dehydrogenases/reductases (SDR) family.

It localises to the endoplasmic reticulum membrane. It carries out the reaction a very-long-chain (3R)-3-hydroxyacyl-CoA + NADP(+) = a very-long-chain 3-oxoacyl-CoA + NADPH + H(+). It functions in the pathway lipid metabolism; fatty acid biosynthesis. In terms of biological role, component of the microsomal membrane bound fatty acid elongation system, which produces the 26-carbon very long-chain fatty acids (VLCFA) from palmitate. Catalyzes the reduction of the 3-ketoacyl-CoA intermediate that is formed in each cycle of fatty acid elongation. VLCFAs serve as precursors for ceramide and sphingolipids. This is Very-long-chain 3-oxoacyl-CoA reductase from Coprinopsis cinerea (strain Okayama-7 / 130 / ATCC MYA-4618 / FGSC 9003) (Inky cap fungus).